We begin with the raw amino-acid sequence, 429 residues long: Enolase (429 aa).

Glutamine 163 contacts (2R)-2-phosphoglycerate. The active-site Proton donor is glutamate 205. Positions 242, 287, and 314 each coordinate Mg(2+). Residues lysine 339, arginine 368, serine 369, and lysine 390 each coordinate (2R)-2-phosphoglycerate. The active-site Proton acceptor is lysine 339.

The protein belongs to the enolase family. Requires Mg(2+) as cofactor.

The protein localises to the cytoplasm. Its subcellular location is the secreted. It is found in the cell surface. The catalysed reaction is (2R)-2-phosphoglycerate = phosphoenolpyruvate + H2O. It functions in the pathway carbohydrate degradation; glycolysis; pyruvate from D-glyceraldehyde 3-phosphate: step 4/5. Catalyzes the reversible conversion of 2-phosphoglycerate (2-PG) into phosphoenolpyruvate (PEP). It is essential for the degradation of carbohydrates via glycolysis. This Magnetococcus marinus (strain ATCC BAA-1437 / JCM 17883 / MC-1) protein is Enolase.